The primary structure comprises 298 residues: Nucleotide-binding protein RSKD131_3085 (298 aa).

11 to 18 is an ATP binding site; the sequence is GPSGAGRT. 58–61 is a binding site for GTP; that stretch reads DVRN.

Belongs to the RapZ-like family.

In terms of biological role, displays ATPase and GTPase activities. This chain is Nucleotide-binding protein RSKD131_3085, found in Cereibacter sphaeroides (strain KD131 / KCTC 12085) (Rhodobacter sphaeroides).